The sequence spans 60 residues: Large ribosomal subunit protein bL32 (60 aa).

This sequence belongs to the bacterial ribosomal protein bL32 family.

The polypeptide is Large ribosomal subunit protein bL32 (Azotobacter vinelandii (strain DJ / ATCC BAA-1303)).